Reading from the N-terminus, the 472-residue chain is Pentatricopeptide repeat-containing protein At3g18970 (472 aa).

8 PPR repeats span residues 107–139, 146–180, 181–216, 219–253, 256–286, 287–321, 322–352, and 358–388; these read NERTFVFVLGACARSASSSALRVGRIVHGMVKK, SELIGTTLLHFYAKNGDLRYARKVFDEMPERTSVT, WNAMIGGYCSHKDKGNHNARKAMVLFRRFSCCGSGV, TDTTMVCVLSAISQTGLLEIGSLVHGYIEKLGFTP, DVFIGTALVDMYSKCGCLNNAFSVFELMKVK, NVFTWTSMATGLALNGRGNETPNLLNRMAESGIKP, NEITFTSLLSAYRHIGLVEEGIELFKSMKTR, and VIEHYGCIVDLLGKAGRIQEAYQFILAMPIK. Positions 393–472 are type E motif; degenerate; sequence LLRSLCNACS…IKTRPGYSFV (80 aa).

Belongs to the PPR family. PCMP-E subfamily.

The polypeptide is Pentatricopeptide repeat-containing protein At3g18970 (PCMP-E93) (Arabidopsis thaliana (Mouse-ear cress)).